The chain runs to 263 residues: Cytochrome c oxidase subunit 3 (263 aa).

7 helical membrane passes run 7-27 (ITVL…KAHL), 44-64 (FSVG…VYSI), 78-98 (GMLS…WGIL), 120-140 (LILT…CLQF), 145-165 (GMSL…ECFA), 191-211 (VTGL…IYFI), and 241-261 (ITIL…YFFY).

Belongs to the cytochrome c oxidase subunit 3 family. As to quaternary structure, component of the cytochrome c oxidase (complex IV, CIV), a multisubunit enzyme composed of a catalytic core of 3 subunits and several supernumerary subunits. The complex exists as a monomer or a dimer and forms supercomplexes (SCs) in the inner mitochondrial membrane with ubiquinol-cytochrome c oxidoreductase (cytochrome b-c1 complex, complex III, CIII).

The protein localises to the mitochondrion inner membrane. It catalyses the reaction 4 Fe(II)-[cytochrome c] + O2 + 8 H(+)(in) = 4 Fe(III)-[cytochrome c] + 2 H2O + 4 H(+)(out). In terms of biological role, component of the cytochrome c oxidase, the last enzyme in the mitochondrial electron transport chain which drives oxidative phosphorylation. The respiratory chain contains 3 multisubunit complexes succinate dehydrogenase (complex II, CII), ubiquinol-cytochrome c oxidoreductase (cytochrome b-c1 complex, complex III, CIII) and cytochrome c oxidase (complex IV, CIV), that cooperate to transfer electrons derived from NADH and succinate to molecular oxygen, creating an electrochemical gradient over the inner membrane that drives transmembrane transport and the ATP synthase. Cytochrome c oxidase is the component of the respiratory chain that catalyzes the reduction of oxygen to water. Electrons originating from reduced cytochrome c in the intermembrane space (IMS) are transferred via the dinuclear copper A center (CU(A)) of subunit 2 and heme A of subunit 1 to the active site in subunit 1, a binuclear center (BNC) formed by heme A3 and copper B (CU(B)). The BNC reduces molecular oxygen to 2 water molecules using 4 electrons from cytochrome c in the IMS and 4 protons from the mitochondrial matrix. In Plasmodium vivax, this protein is Cytochrome c oxidase subunit 3 (COIII).